The sequence spans 479 residues: tRNA-dihydrouridine(20) synthase [NAD(P)+] (479 aa).

FMN is bound by residues 14 to 16 (PMV) and Gln-87. Cys-116 functions as the Proton donor in the catalytic mechanism. Residues Lys-159, His-187, 221–223 (NGD), and 245–246 (AR) contribute to the FMN site.

The protein belongs to the Dus family. Dus2 subfamily. The cofactor is FMN.

Its subcellular location is the cytoplasm. It is found in the nucleus. The catalysed reaction is 5,6-dihydrouridine(20) in tRNA + NADP(+) = uridine(20) in tRNA + NADPH + H(+). The enzyme catalyses 5,6-dihydrouridine(20) in tRNA + NAD(+) = uridine(20) in tRNA + NADH + H(+). It carries out the reaction a 5,6-dihydrouridine in mRNA + NAD(+) = a uridine in mRNA + NADH + H(+). It catalyses the reaction a 5,6-dihydrouridine in mRNA + NADP(+) = a uridine in mRNA + NADPH + H(+). Functionally, catalyzes the NADPH-dependent synthesis of dihydrouridine, a modified base found in the D-loop of most tRNAs. Specifically modifies U20 in cytoplasmic tRNAs. Also able to mediate dihydrouridylation of some mRNAs, thereby affecting their translation. The sequence is that of tRNA-dihydrouridine(20) synthase [NAD(P)+] from Schizosaccharomyces pombe (strain 972 / ATCC 24843) (Fission yeast).